Consider the following 92-residue polypeptide: Bombyxin A-5 (92 aa).

Residues 1-19 (MKLLLAIALMLTTVMWAST) form the signal peptide. Q20 is modified (pyrrolidone carboxylic acid). Intrachain disulfides connect C29–C79, C41–C92, and C78–C83. Residues 50 to 71 (SDAQFASYGSAWLMPYSEGRDQ) constitute a propeptide, c peptide like.

The protein belongs to the insulin family. As to quaternary structure, heterodimer of a B chain and an A chain linked by two disulfide bonds.

It localises to the secreted. Its function is as follows. Brain peptide responsible for activation of prothoracic glands to produce ecdysone in insects. The protein is Bombyxin A-5 (BBXA5) of Bombyx mori (Silk moth).